The following is a 147-amino-acid chain: Large ribosomal subunit protein uL13 (147 aa).

Belongs to the universal ribosomal protein uL13 family. Part of the 50S ribosomal subunit.

Functionally, this protein is one of the early assembly proteins of the 50S ribosomal subunit, although it is not seen to bind rRNA by itself. It is important during the early stages of 50S assembly. This chain is Large ribosomal subunit protein uL13, found in Mycolicibacterium gilvum (strain PYR-GCK) (Mycobacterium gilvum (strain PYR-GCK)).